The chain runs to 608 residues: Putative multicopper oxidase GMC1 (608 aa).

3 Plastocyanin-like domains span residues 51 to 163 (INGY…LIVE), 243 to 374 (LING…ELYR), and 421 to 548 (ERTF…FEVP). Cu cation is bound by residues His-100, His-102, His-145, and His-147. Positions 452, 455, 457, 530, 531, 532, and 536 each coordinate Cu cation.

This sequence belongs to the multicopper oxidase family. The cofactor is Cu cation.

Could be an iron transport multicopper oxidase, which is required for Fe(2+) high affinity uptake. May be required to oxidize Fe(2+) and release it from the transporter. Essential component of copper-dependent iron transport. Involved in meiotic prophase and synaptonemal complex (SC) assembly. This is Putative multicopper oxidase GMC1 (GMC1) from Saccharomyces cerevisiae (strain ATCC 204508 / S288c) (Baker's yeast).